We begin with the raw amino-acid sequence, 217 residues long: Aprataxin-like protein (217 aa).

One can recognise an HIT domain in the interval 6-139 (ALKNYVTSPE…HIHVISKDFH (134 aa)). 3 interaction with DNA regions span residues 34–38 (DSFPK), 121–132 (HSVPSMANLHIH), and 144–148 (KNKKH). The active-site Nucleophile is the H130. Positions 188, 191, 205, and 209 each coordinate Zn(2+).

It is found in the nucleus. The protein resides in the cytoplasm. It catalyses the reaction a 5'-end adenosine-5'-diphospho-5'-2'-deoxyribonucleoside-DNA + H2O = a 5'-end 5'-phospho-2'-deoxyribonucleoside-DNA + AMP + 2 H(+). The enzyme catalyses a 5'-end adenosine-5'-diphospho-5'-ribonucleoside-2'-deoxyribonucleotide-DNA + H2O = a 5'-end 5'-phospho-ribonucleoside-2'-deoxyribonucleotide-DNA + AMP + 2 H(+). It carries out the reaction a 3'-end 2'-deoxyribonucleotide-3'-diphospho-5'-guanosine-DNA + H2O = a 3'-end 2'-deoxyribonucleotide 3'-phosphate-DNA + GMP + 2 H(+). In terms of biological role, DNA-binding protein involved in single-strand DNA break repair, double-strand DNA break repair and base excision repair. Resolves abortive DNA ligation intermediates formed either at base excision sites, or when DNA ligases attempt to repair non-ligatable breaks induced by reactive oxygen species. Catalyzes the release of adenylate groups covalently linked to 5'-phosphate termini, resulting in the production of 5'-phosphate termini that can be efficiently rejoined. Likewise, catalyzes the release of 3'-linked guanosine (DNAppG) and inosine (DNAppI) from DNA, but has higher specific activity with 5'-linked adenosine (AppDNA). In Saccharomyces cerevisiae (strain ATCC 204508 / S288c) (Baker's yeast), this protein is Aprataxin-like protein (HNT3).